Here is a 171-residue protein sequence, read N- to C-terminus: Protein phosphatase 1 regulatory subunit 1A (171 aa).

The residue at position 1 (M1) is an N-acetylmethionine. The segment at 9–12 (KIQF) is essential for activity. The tract at residues 17–171 (LEPHLDPEAA…PLDSQGASLV (155 aa)) is disordered. Basic and acidic residues predominate over residues 19 to 29 (PHLDPEAAEQI). T35 carries the phosphothreonine; by PKA modification. The essential for activity stretch occupies residues 42–54 (TSDQSSPEVDEDR). Phosphoserine occurs at positions 43, 46, 47, and 67. Polar residues predominate over residues 122–133 (GSASRPDTSGTA). Residues 137–148 (AESKPKTQEQRG) are compositionally biased toward basic and acidic residues. Residues 143–171 (TQEQRGVEPSTEDLSAHMLPLDSQGASLV) form an interaction with PPP1R15A region.

Belongs to the protein phosphatase inhibitor 1 family. As to quaternary structure, interacts with PPP1R15A. In terms of processing, phosphorylation of Thr-35 is required for activity.

Its function is as follows. Inhibitor of protein-phosphatase 1. This protein may be important in hormonal control of glycogen metabolism. Hormones that elevate intracellular cAMP increase I-1 activity in many tissues. I-1 activation may impose cAMP control over proteins that are not directly phosphorylated by PKA. Following a rise in intracellular calcium, I-1 is inactivated by calcineurin (or PP2B). Does not inhibit type-2 phosphatases. This Rattus norvegicus (Rat) protein is Protein phosphatase 1 regulatory subunit 1A (Ppp1r1a).